The chain runs to 619 residues: Secretogranin-2 (619 aa).

The signal sequence occupies residues 1–30 (MTESKAYRFGAVLLLIHLIFLVPGTEAASF). Tyr-153 is subject to Sulfotyrosine. A phosphoserine mark is found at Ser-176 and Ser-270. Residues 247–307 (VGGEDWSPME…RKESKDQLSE (61 aa)) are disordered. Composition is skewed to basic and acidic residues over residues 255–286 (MEEK…EMKR) and 295–307 (EGNR…QLSE). Phosphoserine is present on residues Ser-434, Ser-534, Ser-557, and Ser-558.

Belongs to the chromogranin/secretogranin protein family. As to quaternary structure, interacts with Secretogranin III/SCG3. In terms of tissue distribution, brain. Expression in the pituitary is restricted to the anterior lobe. Expression in the hypothalamus is observed in the neuronal cells and neurons of arcuate nucleus, supraoptic nucleus and median eminence (at protein level).

It is found in the secreted. In terms of biological role, neuroendocrine protein of the granin family that regulates the biogenesis of secretory granules. The polypeptide is Secretogranin-2 (Scg2) (Rattus norvegicus (Rat)).